We begin with the raw amino-acid sequence, 624 residues long: LRR receptor kinase BAK1 (624 aa).

Positions 1–25 (MAAHRWAVWAVLLLRLLVPAARVLA) are cleaved as a signal peptide. The Extracellular portion of the chain corresponds to 26–237 (NMEGDALHSL…QSPGSSSSTG (212 aa)). 4 LRR repeats span residues 91–115 (LKNL…LGNL), 117–139 (NLVS…LGNL), 140–163 (LKLR…LTAI), and 164–188 (TALQ…SFSL). N-linked (GlcNAc...) asparagine glycans are attached at residues Asn103, Asn114, Asn127, Asn149, and Asn175. The interval 205–236 (TTKPCPGAPPFSPPPPYNPPTPVQSPGSSSST) is disordered. A compositionally biased stretch (pro residues) spans 210–227 (PGAPPFSPPPPYNPPTPV). A helical membrane pass occupies residues 238-258 (AIAGGVAAGAALLFAIPAIGF). Residues 259–624 (AWYRRRKPQE…LHAVELSGPR (366 aa)) lie on the Cytoplasmic side of the membrane. Residues 301-588 (FSNKNILGRG…GLAERWEEWQ (288 aa)) form the Protein kinase domain. Residues 307-315 (LGRGGFGKV) and Lys329 contribute to the ATP site. The active-site Proton acceptor is the Asp428.

The protein belongs to the protein kinase superfamily. Ser/Thr protein kinase family. In terms of assembly, forms homodimers. Interacts with BRI1. Interacts with REM4.1. Expressed in developing lateral roots, shoot apex, leaf blades, lamina joints and flowers. Expressed at low levels in leaf sheaths and panicles.

Its subcellular location is the cell membrane. The catalysed reaction is L-seryl-[protein] + ATP = O-phospho-L-seryl-[protein] + ADP + H(+). It carries out the reaction L-threonyl-[protein] + ATP = O-phospho-L-threonyl-[protein] + ADP + H(+). Its function is as follows. LRR receptor kinase involved in defense response. Does not seem to be required specifically for XA21-mediated immunity or basal resistance to Xanthomonas oryzae pv. oryzae (Xoo), or immunity to Magnaporthe oryzae. Involved in brassinosteroid (BR) signaling pathway. Acts as a coreceptor of BRI1. Forms at the plasma membrane a receptor complex with BRI1 which is activated in response to brassinolide. Phosphorylates BRI1. Required for normal plant growth and leaf development. Possesses kinase activity in vitro. This Oryza sativa subsp. japonica (Rice) protein is LRR receptor kinase BAK1.